Reading from the N-terminus, the 351-residue chain is THO complex subunit 3 (351 aa).

A disordered region spans residues 1 to 20 (MAVPAAAMGPSALGQSGPGS). Alanine 2 is subject to N-acetylalanine. WD repeat units lie at residues 53-94 (AHSA…KENN), 97-137 (GHGD…CIAT), 139-178 (NTKG…SKAE), 180-221 (QFKF…QSIN), 222-261 (AHPS…CVRC), and 264-303 (RLDW…KLWE).

The protein belongs to the THOC3 family. As to quaternary structure, component of the THO subcomplex, which is composed of THOC1, THOC2, THOC3, THOC5, THOC6 and THOC7. The THO subcomplex interacts with DDX39B to form the THO-DDX39B complex which multimerizes into a 28-subunit tetrameric assembly. Component of the transcription/export (TREX) complex at least composed of ALYREF/THOC4, DDX39B, SARNP/CIP29, CHTOP and the THO subcomplex; in the complex interacts with THOC2. TREX seems to have a dynamic structure involving ATP-dependent remodeling.

The protein resides in the nucleus. It is found in the nucleus speckle. Component of the THO subcomplex of the TREX complex which is thought to couple mRNA transcription, processing and nuclear export, and which specifically associates with spliced mRNA and not with unspliced pre-mRNA. Required for efficient export of polyadenylated RNA and spliced mRNA. The THOC1-THOC2-THOC3 core complex alone is sufficient to bind export factor NXF1-NXT1 and promote ATPase activity of DDX39B. TREX is recruited to spliced mRNAs by a transcription-independent mechanism, binds to mRNA upstream of the exon-junction complex (EJC) and is recruited in a splicing- and cap-dependent manner to a region near the 5' end of the mRNA where it functions in mRNA export to the cytoplasm via the TAP/NXF1 pathway. In terms of biological role, (Microbial infection) The TREX complex is essential for the export of Kaposi's sarcoma-associated herpesvirus (KSHV) intronless mRNAs and infectious virus production. This Homo sapiens (Human) protein is THO complex subunit 3 (THOC3).